Consider the following 280-residue polypeptide: Small ribosomal subunit protein uS15m (280 aa).

Belongs to the universal ribosomal protein uS15 family. As to quaternary structure, component of the mitochondrial ribosome small subunit (28S) which comprises a 12S rRNA and about 30 distinct proteins. Expressed in anterior and posterior midgut primordia in stage 11 embryos. In stage 13 embryos, expression is high in the developing midgut and hindgut. In stage 16 embryos, expression is elevated in the midgut, hindgut, and in a small region that will give rise to pharyngeal muscles and to the stomatogastric nervous system. In larvae, expression is predominant in the gut, and head, presumably in pharyngeal muscles.

It localises to the mitochondrion. Its function is as follows. Essential for gut mitochondrial activity. Might be involved in tissue specific growth factor production. This chain is Small ribosomal subunit protein uS15m (bonsai), found in Drosophila melanogaster (Fruit fly).